The primary structure comprises 111 residues: Large ribosomal subunit protein eL33x (111 aa).

The protein belongs to the eukaryotic ribosomal protein eL33 family.

In Arabidopsis thaliana (Mouse-ear cress), this protein is Large ribosomal subunit protein eL33x (RPL35AD).